The following is a 285-amino-acid chain: Small ribosomal subunit biogenesis GTPase RsgA (285 aa).

The 162-residue stretch at 56–217 folds into the CP-type G domain; the sequence is DNLLIRPIVA…IIDTPGFSSI (162 aa). GTP contacts are provided by residues 105 to 108 and 159 to 167; these read NKID and GPSGVGKSS. Cys241, Cys246, His248, and Cys254 together coordinate Zn(2+).

The protein belongs to the TRAFAC class YlqF/YawG GTPase family. RsgA subfamily. Monomer. Associates with 30S ribosomal subunit, binds 16S rRNA. Zn(2+) serves as cofactor.

It localises to the cytoplasm. Its function is as follows. One of several proteins that assist in the late maturation steps of the functional core of the 30S ribosomal subunit. Helps release RbfA from mature subunits. May play a role in the assembly of ribosomal proteins into the subunit. Circularly permuted GTPase that catalyzes slow GTP hydrolysis, GTPase activity is stimulated by the 30S ribosomal subunit. The sequence is that of Small ribosomal subunit biogenesis GTPase RsgA from Fusobacterium nucleatum subsp. nucleatum (strain ATCC 25586 / DSM 15643 / BCRC 10681 / CIP 101130 / JCM 8532 / KCTC 2640 / LMG 13131 / VPI 4355).